A 530-amino-acid chain; its full sequence is MLLWPLLLLLLLLPTLALLRQQRSQDARLSWLAGLQHRVAWGALVWAATWQRRRLEQSTLHVHQSQQQALRWCLQGAQRPHCSLRRSTDISTFRNHLPLTKASQTQQEDSGEQPLPPTSNQDLGEASLQATLLGLAALNKAYPEVLAQGRTARVTLTSPWPRPLPWPGNTLGQVGTPGTKDPRALLLDALRSPGLRALEAGTAVELLDVFLGLETDGEELAGAIAAGNPGAPLRERAAELREALEQGPRGLALRLWPKLQVVVTLDAGGQAEAVAALGALWCQGLAFFSPAYAASGGVLGLNLQPEQPHGLYLLPPGAPFIELLPVKEGTQEEAASTLLLAEAQQGKEYELVLTDRASLTRCRLGDVVRVVGAYNQCPVVRFICRLDQTLSVRGEDIGEDLFSEALGRAVGQWAGAKLLDHGCVESSILDSSAGSAPHYEVFVALRGLRNLSEENRDKLDHCLQEASPRYKSLRFWGSVGPARVHLVGQGAFRALRAALAACPSSPFPPAMPRVLRHRHLAQCLQERVVS.

Residues 1–17 (MLLWPLLLLLLLLPTLA) form the signal peptide. The tract at residues 99 to 122 (LTKASQTQQEDSGEQPLPPTSNQD) is disordered. Residue Asn450 is glycosylated (N-linked (GlcNAc...) asparagine). Gln489 bears the N5-methylglutamine mark.

Belongs to the GH3 family. Methylated at Gln-489 by N6AMT1.

Its subcellular location is the endoplasmic reticulum. It is found in the nucleus envelope. This Homo sapiens (Human) protein is GH3 domain-containing protein (GHDC).